The sequence spans 128 residues: Translation initiation factor 5A (128 aa).

Lys35 is subject to Hypusine.

The protein belongs to the eIF-5A family.

Its subcellular location is the cytoplasm. Its function is as follows. Functions by promoting the formation of the first peptide bond. The polypeptide is Translation initiation factor 5A (eIF5A) (Methanocella arvoryzae (strain DSM 22066 / NBRC 105507 / MRE50)).